A 208-amino-acid chain; its full sequence is Putative dioxygenase RT0384 (208 aa).

The protein belongs to the intradiol ring-cleavage dioxygenase family.

The polypeptide is Putative dioxygenase RT0384 (Rickettsia typhi (strain ATCC VR-144 / Wilmington)).